A 71-amino-acid chain; its full sequence is MKKTFYHYMMKHRAALFSNEISNLAEAMYDDLSFPKQSEDYDEISSYLELSGMLASMSIFDEAWELYIQDR.

The protein belongs to the UPF0346 family.

This is UPF0346 protein BCE_2336 from Bacillus cereus (strain ATCC 10987 / NRS 248).